We begin with the raw amino-acid sequence, 201 residues long: FMN-dependent NADH:quinone oxidoreductase (201 aa).

FMN contacts are provided by residues Ser10, 16–18, 96–99, and 140–143; these read SQS, MYNF, and SRGG.

The protein belongs to the azoreductase type 1 family. As to quaternary structure, homodimer. FMN serves as cofactor.

The catalysed reaction is 2 a quinone + NADH + H(+) = 2 a 1,4-benzosemiquinone + NAD(+). It carries out the reaction N,N-dimethyl-1,4-phenylenediamine + anthranilate + 2 NAD(+) = 2-(4-dimethylaminophenyl)diazenylbenzoate + 2 NADH + 2 H(+). Functionally, quinone reductase that provides resistance to thiol-specific stress caused by electrophilic quinones. In terms of biological role, also exhibits azoreductase activity. Catalyzes the reductive cleavage of the azo bond in aromatic azo compounds to the corresponding amines. This is FMN-dependent NADH:quinone oxidoreductase from Escherichia coli O157:H7.